A 205-amino-acid polypeptide reads, in one-letter code: Probable GTP-binding protein EngB (205 aa).

Positions 27 to 201 constitute an EngB-type G domain; that stretch reads TGIEIAFAGR…AAKLDFWFSP (175 aa). Residues 35 to 42, 62 to 66, 80 to 83, 147 to 150, and 180 to 182 each bind GTP; these read GRSNAGKS, GRTQL, DLPG, TKAD, and FSA. Mg(2+)-binding residues include serine 42 and threonine 64.

It belongs to the TRAFAC class TrmE-Era-EngA-EngB-Septin-like GTPase superfamily. EngB GTPase family. Requires Mg(2+) as cofactor.

Necessary for normal cell division and for the maintenance of normal septation. The polypeptide is Probable GTP-binding protein EngB (Haemophilus influenzae (strain PittEE)).